The following is a 486-amino-acid chain: Dipeptide and tripeptide permease B (486 aa).

At M1–R27 the chain is on the cytoplasmic side. Residues F28–S48 traverse the membrane as a helical segment. Residues Q49–A52 are Periplasmic-facing. Residues F53–V73 traverse the membrane as a helical segment. The Cytoplasmic segment spans residues G74–R82. Residues T83 to L103 form a helical membrane-spanning segment. Topologically, residues H104 to N106 are periplasmic. A helical membrane pass occupies residues L107–A127. The Cytoplasmic segment spans residues S128–T146. A helical transmembrane segment spans residues L147 to A167. Residues E168–Y172 lie on the Periplasmic side of the membrane. Residues A173–C193 form a helical membrane-spanning segment. The Cytoplasmic segment spans residues R194–Y211. The chain crosses the membrane as a helical span at residues T212–M232. Residue H233 is a topological domain, periplasmic. Residues N234–F254 form a helical membrane-spanning segment. Residues R255–K267 lie on the Cytoplasmic side of the membrane. A helical membrane pass occupies residues M268 to M288. Topologically, residues P289–P311 are periplasmic. Residues V312 to L332 form a helical membrane-spanning segment. At Y333–K348 the chain is on the cytoplasmic side. A helical transmembrane segment spans residues F349–W369. At F370–G375 the chain is on the periplasmic side. The helical transmembrane segment at L376–I396 threads the bilayer. The Cytoplasmic segment spans residues S397–M419. The chain crosses the membrane as a helical span at residues W420–A440. The Periplasmic portion of the chain corresponds to P441–S456. Residues V457–P477 form a helical membrane-spanning segment. Residues L478–K486 lie on the Cytoplasmic side of the membrane.

This sequence belongs to the major facilitator superfamily. Proton-dependent oligopeptide transporter (POT/PTR) (TC 2.A.17) family. DtpB subfamily.

Its subcellular location is the cell inner membrane. Functionally, proton-dependent permease that transports di- and tripeptides. This is Dipeptide and tripeptide permease B from Photorhabdus luminescens (Xenorhabdus luminescens).